The primary structure comprises 1196 residues: Cingulin (1196 aa).

Residues 7–354 (MAEPRGPVDH…LVMTSGSAKG (348 aa)) are head. The ZIM signature appears at 48 to 62 (ANTYGVAVRVQGIAG). Residues 54-67 (AVRVQGIAGQPFVV) form an interaction with TJP1/ZO1 region. The interval 82–105 (IKGTNNRGPPGALSSDSELPESTY) is disordered. Residues serine 95, serine 96, serine 98, serine 135, serine 137, serine 140, serine 155, serine 165, and serine 214 each carry the phosphoserine modification. Residues 95-105 (SSDSELPESTY) show a composition bias toward polar residues. The interval 183 to 263 (NKFDSRQGGQ…NQGPLGGFSC (81 aa)) is disordered. A compositionally biased stretch (basic and acidic residues) spans 218-231 (RLPRDTLDEREHQF). Positions 245–256 (MGNSKQSSQNQG) are enriched in polar residues. Serine 274 is subject to Phosphoserine. Residues 355-1150 (LTGQSELSQK…ARIKTLEKDS (796 aa)) adopt a coiled-coil conformation. An N6-acetyllysine modification is found at lysine 576. Positions 884-897 (AQRQAKEWATEAEK) are enriched in basic and acidic residues. Disordered stretches follow at residues 884-906 (AQRQ…SRLQ), 1023-1061 (DLKS…EERE), and 1149-1174 (DSWR…EEFD). The segment covering 1038-1050 (SASLSQLESQNQE) has biased composition (low complexity). Basic and acidic residues predominate over residues 1051-1061 (LQERLQAEERE). Residues 1155–1196 (SRSAAESAQREGLSSDEEFDSVYDPSSIASLLTESNLQTSSC) form a tail region. A phosphoserine mark is found at serine 1168, serine 1169, and serine 1175.

This sequence belongs to the cingulin family. In terms of assembly, homodimer. Interacts with TJP1/ZO1 and SPEF1.

The protein resides in the cell junction. It is found in the tight junction. Its function is as follows. Probably plays a role in the formation and regulation of the tight junction (TJ) paracellular permeability barrier. The sequence is that of Cingulin from Canis lupus familiaris (Dog).